A 356-amino-acid polypeptide reads, in one-letter code: Heparan sulfate 2-O-sulfotransferase 1 (356 aa).

Topologically, residues 1-11 (MGLLRIMLPPK) are cytoplasmic. Residues 12 to 28 (LQLLAVLVFGVAVLFLE) traverse the membrane as a helical; Signal-anchor for type II membrane protein segment. Residues 24–51 (VLFLENQIQKLEESRGKLERAIARHEVR) are a coiled coil. Over 29–356 (NQIQKLEESR…FYEKIYPKSN (328 aa)) the chain is Lumenal. 6 residues coordinate adenosine 3',5'-bisphosphate: Lys83, Thr84, Ala85, Ser86, Thr87, and Ser88. 2 N-linked (GlcNAc...) asparagine glycosylation sites follow: Asn108 and Asn127. Catalysis depends on residues His140 and His142. Adenosine 3',5'-bisphosphate contacts are provided by Arg164 and Ser172. 2 cysteine pairs are disulfide-bonded: Cys201/Cys209 and Cys222/Cys228. Adenosine 3',5'-bisphosphate-binding residues include Tyr279, Ser285, Thr290, and Lys293.

It belongs to the sulfotransferase 3 family. Homotrimer. As to expression, expressed in heart, limb, head and trunk. At stages 20 and 24, it is expressed in the most regions of the first and second pharyngeal arche. In both wing and leg buds, it is detected at the overlying ectoderm and mesenchyme throughout stages 21, 23 and 24.

Its subcellular location is the golgi apparatus membrane. Catalyzes the transfer of a sulfo group from 3'-phospho-5'-adenylyl sulfate (PAPS) to the 2-OH position of iduronic acid (IdoA) or glucuronic acid (GlcA) within the heparan sulfate (HS) chain and participates in HS biosynthesis. The sequence is that of Heparan sulfate 2-O-sulfotransferase 1 from Gallus gallus (Chicken).